The sequence spans 284 residues: Phosphonates import ATP-binding protein PhnC 2 (284 aa).

Residues 5 to 253 (IEVRGLSKSF…MLRDLYGTEA (249 aa)) form the ABC transporter domain. Residue 38–45 (GASGSGKS) participates in ATP binding.

Belongs to the ABC transporter superfamily. Phosphonates importer (TC 3.A.1.9.1) family. As to quaternary structure, the complex is composed of two ATP-binding proteins (PhnC), two transmembrane proteins (PhnE) and a solute-binding protein (PhnD).

Its subcellular location is the cell inner membrane. It catalyses the reaction phosphonate(out) + ATP + H2O = phosphonate(in) + ADP + phosphate + H(+). In terms of biological role, part of the ABC transporter complex PhnCDE involved in phosphonates import. Responsible for energy coupling to the transport system. This is Phosphonates import ATP-binding protein PhnC 2 from Cupriavidus necator (strain ATCC 17699 / DSM 428 / KCTC 22496 / NCIMB 10442 / H16 / Stanier 337) (Ralstonia eutropha).